The following is a 337-amino-acid chain: Ornithine carbamoyltransferase, catabolic (337 aa).

Carbamoyl phosphate-binding positions include 57–60 (STRT), glutamine 84, arginine 108, and 135–138 (HPTQ). L-ornithine contacts are provided by residues asparagine 167, aspartate 231, and 235-236 (SM). Residues 272–273 (CL) and arginine 317 contribute to the carbamoyl phosphate site.

It belongs to the aspartate/ornithine carbamoyltransferase superfamily. OTCase family.

Its subcellular location is the cytoplasm. It carries out the reaction carbamoyl phosphate + L-ornithine = L-citrulline + phosphate + H(+). Its pathway is amino-acid degradation; L-arginine degradation via ADI pathway; carbamoyl phosphate from L-arginine: step 2/2. Functionally, reversibly catalyzes the transfer of the carbamoyl group from carbamoyl phosphate (CP) to the N(epsilon) atom of ornithine (ORN) to produce L-citrulline. The protein is Ornithine carbamoyltransferase, catabolic of Streptococcus suis (strain 89/1591).